We begin with the raw amino-acid sequence, 199 residues long: Ribosome maturation factor RimP (199 aa).

A disordered region spans residues Ala165–Gln199. Over residues Pro172–Gln199 the composition is skewed to acidic residues.

It belongs to the RimP family.

The protein resides in the cytoplasm. In terms of biological role, required for maturation of 30S ribosomal subunits. The protein is Ribosome maturation factor RimP of Hyphomonas neptunium (strain ATCC 15444).